The primary structure comprises 56 residues: 4Fe-4S ferredoxin FdxA (56 aa).

4Fe-4S ferredoxin-type domains follow at residues 1–28 (MAYV…SSGD) and 29–56 (DRYV…PVQA). 8 residues coordinate [4Fe-4S] cluster: cysteine 9, cysteine 12, cysteine 15, cysteine 19, cysteine 38, cysteine 41, cysteine 44, and cysteine 48.

The cofactor is [4Fe-4S] cluster.

Ferredoxins are iron-sulfur proteins that transfer electrons in a wide variety of metabolic reactions. The protein is 4Fe-4S ferredoxin FdxA of Gottschalkia acidurici (strain ATCC 7906 / DSM 604 / BCRC 14475 / CIP 104303 / KCTC 5404 / NCIMB 10678 / 9a) (Clostridium acidurici).